Reading from the N-terminus, the 172-residue chain is Large ribosomal subunit protein uL10 (172 aa).

This sequence belongs to the universal ribosomal protein uL10 family. Part of the ribosomal stalk of the 50S ribosomal subunit. The N-terminus interacts with L11 and the large rRNA to form the base of the stalk. The C-terminus forms an elongated spine to which L12 dimers bind in a sequential fashion forming a multimeric L10(L12)X complex.

Its function is as follows. Forms part of the ribosomal stalk, playing a central role in the interaction of the ribosome with GTP-bound translation factors. This chain is Large ribosomal subunit protein uL10, found in Nitrobacter hamburgensis (strain DSM 10229 / NCIMB 13809 / X14).